The following is a 183-amino-acid chain: Translocon-associated protein subunit beta (183 aa).

An N-terminal signal peptide occupies residues 1-17; sequence MRLLSFVVLALFAVTQA. At 18-149 the chain is on the lumenal side; the sequence is EEGARLLASK…DRRFSPHFLD (132 aa). N-linked (GlcNAc...) asparagine glycosylation is found at N88 and N104. A helical membrane pass occupies residues 150-169; the sequence is WAAFGVMTLPSIGIPLLLWY. Residues 170–183 are Cytoplasmic-facing; the sequence is SSKRKYDTPKTKKN.

It belongs to the TRAP-beta family. As to quaternary structure, heterotetramer of TRAP-alpha, TRAP-beta, TRAP-delta and TRAP-gamma. Interacts with STING1.

Its subcellular location is the endoplasmic reticulum membrane. Its function is as follows. TRAP proteins are part of a complex whose function is to bind calcium to the ER membrane and thereby regulate the retention of ER resident proteins. The sequence is that of Translocon-associated protein subunit beta (SSR2) from Homo sapiens (Human).